A 372-amino-acid chain; its full sequence is Transaldolase 2 (372 aa).

K140 functions as the Schiff-base intermediate with substrate in the catalytic mechanism.

This sequence belongs to the transaldolase family. Type 2 subfamily.

The protein localises to the cytoplasm. The enzyme catalyses D-sedoheptulose 7-phosphate + D-glyceraldehyde 3-phosphate = D-erythrose 4-phosphate + beta-D-fructose 6-phosphate. It participates in carbohydrate degradation; pentose phosphate pathway; D-glyceraldehyde 3-phosphate and beta-D-fructose 6-phosphate from D-ribose 5-phosphate and D-xylulose 5-phosphate (non-oxidative stage): step 2/3. Its function is as follows. Transaldolase is important for the balance of metabolites in the pentose-phosphate pathway. This is Transaldolase 2 from Streptomyces coelicolor (strain ATCC BAA-471 / A3(2) / M145).